The sequence spans 461 residues: tRNA modification GTPase MnmE (461 aa).

Residues Arg-27, Glu-89, and Arg-128 each coordinate (6S)-5-formyl-5,6,7,8-tetrahydrofolate. The TrmE-type G domain occupies 224–382 (GLATAIVGRP…LEELINKLFF (159 aa)). K(+) is bound at residue Asn-234. GTP is bound by residues 234–239 (NVGKSS), 253–259 (TDVAGTT), and 278–281 (DTAG). Ser-238 lines the Mg(2+) pocket. Thr-253, Val-255, and Thr-258 together coordinate K(+). Mg(2+) is bound at residue Thr-259. Lys-461 contacts (6S)-5-formyl-5,6,7,8-tetrahydrofolate.

It belongs to the TRAFAC class TrmE-Era-EngA-EngB-Septin-like GTPase superfamily. TrmE GTPase family. Homodimer. Heterotetramer of two MnmE and two MnmG subunits. K(+) is required as a cofactor.

Its subcellular location is the cytoplasm. In terms of biological role, exhibits a very high intrinsic GTPase hydrolysis rate. Involved in the addition of a carboxymethylaminomethyl (cmnm) group at the wobble position (U34) of certain tRNAs, forming tRNA-cmnm(5)s(2)U34. The polypeptide is tRNA modification GTPase MnmE (Lactobacillus helveticus (strain DPC 4571)).